Consider the following 293-residue polypeptide: Formamidopyrimidine-DNA glycosylase (293 aa).

Residue P2 is the Schiff-base intermediate with DNA of the active site. The Proton donor role is filled by E3. K60 functions as the Proton donor; for beta-elimination activity in the catalytic mechanism. H110, R129, and R174 together coordinate DNA. The FPG-type zinc-finger motif lies at 259 to 293 (NVYRRTGKECRKCGNLIERKKISGRSTHWCPKCQK). Catalysis depends on R283, which acts as the Proton donor; for delta-elimination activity.

Belongs to the FPG family. In terms of assembly, monomer. The cofactor is Zn(2+).

It catalyses the reaction Hydrolysis of DNA containing ring-opened 7-methylguanine residues, releasing 2,6-diamino-4-hydroxy-5-(N-methyl)formamidopyrimidine.. The catalysed reaction is 2'-deoxyribonucleotide-(2'-deoxyribose 5'-phosphate)-2'-deoxyribonucleotide-DNA = a 3'-end 2'-deoxyribonucleotide-(2,3-dehydro-2,3-deoxyribose 5'-phosphate)-DNA + a 5'-end 5'-phospho-2'-deoxyribonucleoside-DNA + H(+). Involved in base excision repair of DNA damaged by oxidation or by mutagenic agents. Acts as a DNA glycosylase that recognizes and removes damaged bases. Has a preference for oxidized purines, such as 7,8-dihydro-8-oxoguanine (8-oxoG). Has AP (apurinic/apyrimidinic) lyase activity and introduces nicks in the DNA strand. Cleaves the DNA backbone by beta-delta elimination to generate a single-strand break at the site of the removed base with both 3'- and 5'-phosphates. This chain is Formamidopyrimidine-DNA glycosylase, found in Prochlorococcus marinus (strain MIT 9215).